The sequence spans 134 residues: Profilin-2 (134 aa).

A disulfide bridge links cysteine 13 with cysteine 118. Residues alanine 84–threonine 100 carry the Involved in PIP2 interaction motif. Threonine 114 is subject to Phosphothreonine.

This sequence belongs to the profilin family. In terms of assembly, occurs in many kinds of cells as a complex with monomeric actin in a 1:1 ratio. In terms of processing, phosphorylated by MAP kinases.

The protein localises to the cytoplasm. It localises to the cytoskeleton. Its function is as follows. Binds to actin and affects the structure of the cytoskeleton. At high concentrations, profilin prevents the polymerization of actin, whereas it enhances it at low concentrations. This chain is Profilin-2, found in Olea europaea (Common olive).